A 315-amino-acid chain; its full sequence is 4-carboxy-2-hydroxymuconate-6-semialdehyde dehydrogenase (315 aa).

It belongs to the Gfo/Idh/MocA family. As to quaternary structure, homodimer.

The enzyme catalyses 4-carboxy-2-hydroxymuconate semialdehyde hemiacetal + NADP(+) = 2-oxo-2H-pyran-4,6-dicarboxylate + NADPH + H(+). Its pathway is secondary metabolite metabolism; lignin degradation. Its activity is regulated as follows. Inhibited by p-chloromercuribenzoate (10 mM), HgCl2 (10 mM), or 5,5-dithiobis(2-nitrobenzoate) (100 mM). Functionally, involved in the degradation of protocatechuate (PCA) via the PCA 4,5-cleavage pathway. Catalyzes the oxidation of the hemiacetal form of 4-carboxy-2-hydroxymuconate-6-semialdehyde (CHMS) to produce 2-pyrone-4,6-dicarboxylate (PDC). LigC has 10-times-higher affinity to NADP than to NAD. The sequence is that of 4-carboxy-2-hydroxymuconate-6-semialdehyde dehydrogenase (ligC) from Sphingobium sp. (strain NBRC 103272 / SYK-6).